The sequence spans 279 residues: Pantothenate synthetase (279 aa).

Position 26-33 (M26–H33) interacts with ATP. H33 functions as the Proton donor in the catalytic mechanism. Q57 is a (R)-pantoate binding site. Position 57 (Q57) interacts with beta-alanine. G144–D147 contacts ATP. Residue Q150 participates in (R)-pantoate binding. Residues V173 and L181–R184 contribute to the ATP site.

This sequence belongs to the pantothenate synthetase family. Homodimer.

Its subcellular location is the cytoplasm. The catalysed reaction is (R)-pantoate + beta-alanine + ATP = (R)-pantothenate + AMP + diphosphate + H(+). The protein operates within cofactor biosynthesis; (R)-pantothenate biosynthesis; (R)-pantothenate from (R)-pantoate and beta-alanine: step 1/1. In terms of biological role, catalyzes the condensation of pantoate with beta-alanine in an ATP-dependent reaction via a pantoyl-adenylate intermediate. In Burkholderia mallei (strain NCTC 10229), this protein is Pantothenate synthetase.